The sequence spans 338 residues: GTPase Obg (338 aa).

One can recognise an Obg domain in the interval 1–159; sequence MSFIDEVKIH…RWLRLELKLM (159 aa). The OBG-type G domain occupies 160–331; that stretch reads ADVGLLGMPS…LLDEIARQLW (172 aa). GTP is bound by residues 166 to 173, 191 to 195, 213 to 216, 283 to 286, and 312 to 314; these read GMPSVGKS, FTTLK, DIPG, NKMD, and SAA. S173 and T193 together coordinate Mg(2+).

This sequence belongs to the TRAFAC class OBG-HflX-like GTPase superfamily. OBG GTPase family. In terms of assembly, monomer. The cofactor is Mg(2+).

The protein localises to the cytoplasm. An essential GTPase which binds GTP, GDP and possibly (p)ppGpp with moderate affinity, with high nucleotide exchange rates and a fairly low GTP hydrolysis rate. Plays a role in control of the cell cycle, stress response, ribosome biogenesis and in those bacteria that undergo differentiation, in morphogenesis control. The protein is GTPase Obg of Geotalea daltonii (strain DSM 22248 / JCM 15807 / FRC-32) (Geobacter daltonii).